The primary structure comprises 146 residues: Large ribosomal subunit protein bL9 (146 aa).

This sequence belongs to the bacterial ribosomal protein bL9 family.

Its function is as follows. Binds to the 23S rRNA. In Flavobacterium johnsoniae (strain ATCC 17061 / DSM 2064 / JCM 8514 / BCRC 14874 / CCUG 350202 / NBRC 14942 / NCIMB 11054 / UW101) (Cytophaga johnsonae), this protein is Large ribosomal subunit protein bL9.